The following is a 316-amino-acid chain: Ribosomal RNA small subunit methyltransferase H (316 aa).

S-adenosyl-L-methionine-binding positions include 35-37 (AGH), D55, F84, D105, and Q112.

This sequence belongs to the methyltransferase superfamily. RsmH family.

It localises to the cytoplasm. It catalyses the reaction cytidine(1402) in 16S rRNA + S-adenosyl-L-methionine = N(4)-methylcytidine(1402) in 16S rRNA + S-adenosyl-L-homocysteine + H(+). In terms of biological role, specifically methylates the N4 position of cytidine in position 1402 (C1402) of 16S rRNA. The chain is Ribosomal RNA small subunit methyltransferase H from Streptococcus gordonii (strain Challis / ATCC 35105 / BCRC 15272 / CH1 / DL1 / V288).